We begin with the raw amino-acid sequence, 647 residues long: DNA ligase (647 aa).

NAD(+)-binding positions include 30 to 34, 79 to 80, and Glu-105; these read DEEYD and SM. The active-site N6-AMP-lysine intermediate is the Lys-107. NAD(+) is bound by residues Arg-128, Glu-162, and Lys-301. Residues Cys-395, Cys-398, Cys-411, and Cys-416 each coordinate Zn(2+). The BRCT domain maps to 570–647; the sequence is KSDGVIFGKT…ESAFNELVKE (78 aa).

This sequence belongs to the NAD-dependent DNA ligase family. LigA subfamily. Mg(2+) serves as cofactor. Mn(2+) is required as a cofactor.

The enzyme catalyses NAD(+) + (deoxyribonucleotide)n-3'-hydroxyl + 5'-phospho-(deoxyribonucleotide)m = (deoxyribonucleotide)n+m + AMP + beta-nicotinamide D-nucleotide.. In terms of biological role, DNA ligase that catalyzes the formation of phosphodiester linkages between 5'-phosphoryl and 3'-hydroxyl groups in double-stranded DNA using NAD as a coenzyme and as the energy source for the reaction. It is essential for DNA replication and repair of damaged DNA. The protein is DNA ligase of Campylobacter jejuni subsp. jejuni serotype O:2 (strain ATCC 700819 / NCTC 11168).